The chain runs to 551 residues: Nose resistant to fluoxetine protein 5 (551 aa).

The first 20 residues, 1 to 20, serve as a signal peptide directing secretion; that stretch reads MSRNFHIFFLLVSIIQVGNS. A disulfide bond links C151 and C232. The interval 241 to 265 is disordered; that stretch reads EDSEQEEGNVETTVAPTPDDDNSTL.

This sequence belongs to the BPI/LBP/Plunc superfamily. BPI/LBP family. In terms of assembly, interacts with ttr-52. Expressed in the body wall muscle cells and detected at the basal surface of pharyngeal cells and basal-lateral membranes of the intestine.

The protein resides in the secreted. Functionally, plays a role in the uptake of a range of molecules including phosphatidylserine, lipids and xenobiotic compounds from the intestine to surrounding tissues. Possesses lipid transfer activity. Mediates transport of lipids from intestine to reproductive tract. Binds phosphatidylserine. Plays a role in efficient clearance of cell corpses by mediating phosphatidylserine appearance on phagocytic cells, thus promoting phagocytic engulfment of apoptotic cells. Vital for embryonic development. The sequence is that of Nose resistant to fluoxetine protein 5 from Caenorhabditis elegans.